We begin with the raw amino-acid sequence, 142 residues long: MAP3K7 C-terminal-like protein (142 aa).

Detected in lung and peripheral blood leukocytes. Expressed predominantly in peripheral blood leukocytes and ubiquitously in adult and fetal tissues. Also expressed strongly in breast carcinoma GI-101, colon adenocarcinoma GI-112, and prostatic adenocarcinoma PC3.

The polypeptide is MAP3K7 C-terminal-like protein (MAP3K7CL) (Homo sapiens (Human)).